Here is a 148-residue protein sequence, read N- to C-terminus: General odorant-binding protein 69a (148 aa).

The N-terminal stretch at 1–23 (MVARHFSFFLALLILYDLIPSNQ) is a signal peptide. Cystine bridges form between cysteine 42–cysteine 74, cysteine 70–cysteine 121, and cysteine 112–cysteine 130.

It belongs to the PBP/GOBP family. As to expression, expressed in the antenna, mostly on the anterior surface of the third antennal segment. Expressed in auxiliary cells and the third antennal segment and exported to the sensillar lymph (at protein level).

The protein localises to the secreted. Odorant-binding protein required for olfactory behavior and activity of pheromone-sensitive neurons in response to the male-specific pheromone cis-vaccenyl acetate (cVA). Modulates social responsivity differently in males and females, regulating male aggression and female receptivity respectively. The sequence is that of General odorant-binding protein 69a (Obp69a) from Drosophila melanogaster (Fruit fly).